The primary structure comprises 384 residues: S-adenosylmethionine synthase (384 aa).

His16 provides a ligand contact to ATP. A Mg(2+)-binding site is contributed by Asp18. Position 44 (Glu44) interacts with K(+). Residues Glu57 and Gln100 each contribute to the L-methionine site. The segment at 100 to 110 is flexible loop; that stretch reads QSADIAMGVDE. ATP-binding positions include 165 to 167, Asp240, 246 to 247, Ala263, and Lys267; these read DAK and RK. An L-methionine-binding site is contributed by Asp240. Residue Lys271 coordinates L-methionine.

It belongs to the AdoMet synthase family. Homotetramer; dimer of dimers. Mg(2+) serves as cofactor. Requires K(+) as cofactor.

It localises to the cytoplasm. The enzyme catalyses L-methionine + ATP + H2O = S-adenosyl-L-methionine + phosphate + diphosphate. Its pathway is amino-acid biosynthesis; S-adenosyl-L-methionine biosynthesis; S-adenosyl-L-methionine from L-methionine: step 1/1. Catalyzes the formation of S-adenosylmethionine (AdoMet) from methionine and ATP. The overall synthetic reaction is composed of two sequential steps, AdoMet formation and the subsequent tripolyphosphate hydrolysis which occurs prior to release of AdoMet from the enzyme. This chain is S-adenosylmethionine synthase, found in Teredinibacter turnerae (strain ATCC 39867 / T7901).